The chain runs to 580 residues: Phosphatase and actin regulator 1 (580 aa).

Residues serine 67 and serine 78 each carry the phosphoserine modification. Threonine 104 bears the Phosphothreonine mark. Residues 108–129 carry the Nuclear localization signal motif; that stretch reads RRRSKFANLGRIFKPWKWRKKK. The stretch at 138-163 is one RPEL 1 repeat; that stretch reads AALERKISMRQSREELIKRGVLKEIY. Disordered stretches follow at residues 331–355 and 376–410; these read EQRVPCSTSYHSSGLHSGDGVTKAG and KENVPHESDYEDSSCLYTREEEEEEEDEDDDSSLY. Positions 335–345 are enriched in polar residues; sequence PCSTSYHSSGL. The span at 395-407 shows a compositional bias: acidic residues; the sequence is EEEEEEEDEDDDS. RPEL repeat units lie at residues 422–447, 460–484, and 498–523; these read DSLAIKLSNRPSKRELEEKNILPRQT, TKLTRRLSQRPTAEELEQRNILKPR, and RRLTRKLSQRPTVEELRERKILIRFS. The disordered stretch occupies residues 462-494; the sequence is LTRRLSQRPTAEELEQRNILKPRNEQEEQEEKR. Position 467 is a phosphoserine (serine 467). Basic and acidic residues predominate over residues 471-494; it reads TAEELEQRNILKPRNEQEEQEEKR. At serine 505 the chain carries Phosphoserine.

Belongs to the phosphatase and actin regulator family. Interacts (via RPEL repeats) with ACTA1 and PPP1CA; ACTA1 and PPP1CA compete for the same binding site. Detected in umbilical vein endothelial cells.

The protein localises to the cytoplasm. It localises to the synapse. Its subcellular location is the nucleus. Its function is as follows. Binds actin monomers (G actin) and plays a role in multiple processes including the regulation of actin cytoskeleton dynamics, actin stress fibers formation, cell motility and survival, formation of tubules by endothelial cells, and regulation of PPP1CA activity. Involved in the regulation of cortical neuron migration and dendrite arborization. This is Phosphatase and actin regulator 1 (PHACTR1) from Homo sapiens (Human).